We begin with the raw amino-acid sequence, 217 residues long: Large ribosomal subunit protein uL3 (217 aa).

Positions 135–154 (ATHGNSLSHRAPGSIGQCQT) are disordered. At glutamine 153 the chain carries N5-methylglutamine.

This sequence belongs to the universal ribosomal protein uL3 family. Part of the 50S ribosomal subunit. Forms a cluster with proteins L14 and L19. Methylated by PrmB.

Its function is as follows. One of the primary rRNA binding proteins, it binds directly near the 3'-end of the 23S rRNA, where it nucleates assembly of the 50S subunit. This is Large ribosomal subunit protein uL3 from Coxiella burnetii (strain CbuG_Q212) (Coxiella burnetii (strain Q212)).